Reading from the N-terminus, the 96-residue chain is Frd operon uncharacterized protein C (96 aa).

It belongs to the HupF/HypC family.

This is Frd operon uncharacterized protein C from Proteus vulgaris.